A 234-amino-acid chain; its full sequence is Sperm flagellar protein 1 (234 aa).

Residues 7-112 (EEALHQLYLW…VLIPLRQRLE (106 aa)) form the Calponin-homology (CH) domain. The segment at 181–234 (VLQIAEKEQELLASQETVQVLQMKVKRLEHLLQLKNVRIDDLSRRLQQAERKQR) is essential for homodimerization and microtubule bundling activity.

As to quaternary structure, homodimer. Interacts with actin, TJP1, CGN and CDH1. In terms of tissue distribution, expressed predominantly in the seminiferous epithelium of adult testis. Expressed in pillar cells of the organ of Corti (at protein level). Expressed in brain, kidney, lung and testis. Highly expressed in the trachea, lung and oviduct.

The protein resides in the cytoplasm. Its subcellular location is the cell projection. The protein localises to the cilium. It is found in the flagellum. It localises to the cytoskeleton. The protein resides in the cilium axoneme. Its subcellular location is the apical cell membrane. The protein localises to the basolateral cell membrane. It is found in the stress fiber. It localises to the microvillus. The protein resides in the lamellipodium. Its subcellular location is the filopodium. In terms of biological role, microtubule-associated protein that promotes microtubule bundling and stabilizes microtubules against depolymerization in response to cold shock. Microtubule-associated protein involved in the stabilization of microtubules along the axis of migration during radial intercalation. Promotes the establishment and stabilization of an axis of microtubules required for the active migration of cells into the outer epithelium. Essential for ciliary central apparatus formation which requires both its microtubule-binding and bundling activities and for ciliary localization of HYDIN and SPAG6 in ependymal cilia. Binds actin in intestinal epithelial cells (IECs), essential for IECs survival and contributes to formation of filopodia and lamellipodia in migrating IECs. Regulates planar cell polarity signaling pathway and asymmetric microtubule accumulation in ciliated epithelia. This is Sperm flagellar protein 1 (Spef1) from Mus musculus (Mouse).